A 164-amino-acid chain; its full sequence is Ribosome maturation factor RimM (164 aa).

A PRC barrel domain is found at 90–161 (EGRYYVADII…EIIIKPVKTW (72 aa)).

The protein belongs to the RimM family. Binds ribosomal protein uS19.

The protein localises to the cytoplasm. Functionally, an accessory protein needed during the final step in the assembly of 30S ribosomal subunit, possibly for assembly of the head region. Essential for efficient processing of 16S rRNA. May be needed both before and after RbfA during the maturation of 16S rRNA. It has affinity for free ribosomal 30S subunits but not for 70S ribosomes. This is Ribosome maturation factor RimM from Clostridium tetani (strain Massachusetts / E88).